Reading from the N-terminus, the 169-residue chain is Probable phospholipid hydroperoxide glutathione peroxidase (169 aa).

Residue C43 is part of the active site.

Belongs to the glutathione peroxidase family. Germinating seed, apex, flower, as well as in stressed tissues.

It is found in the cytoplasm. The catalysed reaction is a hydroperoxy polyunsaturated fatty acid + 2 glutathione = a hydroxy polyunsaturated fatty acid + glutathione disulfide + H2O. Functionally, protects cells and enzymes from oxidative damage, by catalyzing the reduction of hydrogen peroxide, lipid peroxides and organic hydroperoxide, by glutathione. The chain is Probable phospholipid hydroperoxide glutathione peroxidase from Nicotiana sylvestris (Wood tobacco).